The chain runs to 357 residues: Decorin (357 aa).

An N-terminal signal peptide occupies residues 1 to 16 (MRLVLLFVLLLPVCLA). Positions 17 to 30 (TRFHQKGLFDFMIE) are excised as a propeptide. Ser46 carries an O-linked (Xyl...) (glycosaminoglycan) serine glycan. 2 disulfide bridges follow: Cys52-Cys58 and Cys56-Cys65. LRR repeat units lie at residues 71–91 (ERVP…NNKI), 92–115 (TEIK…NNKI), 116–139 (SKIS…KNNL), 140–160 (KELP…ENEI), 161–184 (SKLR…TNPL), 185–210 (KSSG…DTNI), 211–231 (TSIP…GNKI), 232–255 (SKID…FNSI), 256–279 (SSVE…NNEL), 280–302 (VRVP…NNKI), 303–332 (ASIG…SNPV), and 333–357 (QYWE…GNYK). An N-linked (GlcNAc...) asparagine glycan is attached at Asn209. Asn260 is a glycosylation site (N-linked (GlcNAc...) asparagine). Cys311 and Cys344 are oxidised to a cystine.

The protein belongs to the small leucine-rich proteoglycan (SLRP) family. SLRP class I subfamily. Binds to type I and type II collagen, to fibronectin and TGF-beta. Forms a ternary complex with MFAP2 and ELN. Post-translationally, the attached glycosaminoglycan chain can be either chondroitin sulfate or dermatan sulfate depending upon the tissue of origin.

Its subcellular location is the secreted. It is found in the extracellular space. The protein resides in the extracellular matrix. Functionally, may affect the rate of fibrils formation. The chain is Decorin (DCN) from Gallus gallus (Chicken).